The chain runs to 236 residues: Phosphoribosylaminoimidazole-succinocarboxamide synthase (236 aa).

Belongs to the SAICAR synthetase family.

The catalysed reaction is 5-amino-1-(5-phospho-D-ribosyl)imidazole-4-carboxylate + L-aspartate + ATP = (2S)-2-[5-amino-1-(5-phospho-beta-D-ribosyl)imidazole-4-carboxamido]succinate + ADP + phosphate + 2 H(+). The protein operates within purine metabolism; IMP biosynthesis via de novo pathway; 5-amino-1-(5-phospho-D-ribosyl)imidazole-4-carboxamide from 5-amino-1-(5-phospho-D-ribosyl)imidazole-4-carboxylate: step 1/2. This is Phosphoribosylaminoimidazole-succinocarboxamide synthase from Cellvibrio japonicus (strain Ueda107) (Pseudomonas fluorescens subsp. cellulosa).